We begin with the raw amino-acid sequence, 525 residues long: Exoglucanase 1 (525 aa).

Residues 1-18 form the signal peptide; the sequence is MRTAKFATLAALVASAAA. The catalytic stretch occupies residues 19 to 467; the sequence is QQACSLTTER…AGNGGNNGGN (449 aa). Catalysis depends on Glu-231, which acts as the Nucleophile. The active-site Proton donor is the Glu-236. Asn-289 is a glycosylation site (N-linked (GlcNAc...) asparagine). The disordered stretch occupies residues 454–492; that stretch reads GLPGAGNGGNNGGNPPPPTTTTSSAPATTTTASAGPKAG. Residues 456–465 show a composition bias toward gly residues; sequence PGAGNGGNNG. Residues 468–489 are linker; it reads PPPPTTTTSSAPATTTTASAGP. A compositionally biased stretch (low complexity) spans 473–489; that stretch reads TTTSSAPATTTTASAGP. The CBM1 domain maps to 489 to 525; that stretch reads PKAGRWQQCGGIGFTGPTQCEEPYICTKLNDWYSQCL. 2 disulfide bridges follow: Cys-497–Cys-514 and Cys-508–Cys-524.

It belongs to the glycosyl hydrolase 7 (cellulase C) family.

It carries out the reaction Hydrolysis of (1-&gt;4)-beta-D-glucosidic linkages in cellulose and cellotetraose, releasing cellobiose from the non-reducing ends of the chains.. Functionally, the biological conversion of cellulose to glucose generally requires three types of hydrolytic enzymes: (1) Endoglucanases which cut internal beta-1,4-glucosidic bonds; (2) Exocellobiohydrolases that cut the disaccharide cellobiose from the non-reducing end of the cellulose polymer chain; (3) Beta-1,4-glucosidases which hydrolyze the cellobiose and other short cello-oligosaccharides to glucose. The chain is Exoglucanase 1 (CBH-1) from Humicola insolens (Soft-rot fungus).